Consider the following 295-residue polypeptide: uncharacterized protein (295 aa).

The 230-residue stretch at 4-233 folds into the Sigma-54 factor interaction domain; the sequence is IVVKSMAMEK…LQNTIERLVL (230 aa).

This is an uncharacterized protein from Pseudomonas sp. (strain NS671).